We begin with the raw amino-acid sequence, 335 residues long: Methionine import ATP-binding protein MetN (335 aa).

One can recognise an ABC transporter domain in the interval 2–241 (IQFQRLHKSY…PQHPTTRRFV (240 aa)). 38–45 (GHSGAGKS) lines the ATP pocket.

The protein belongs to the ABC transporter superfamily. Methionine importer (TC 3.A.1.24) family. In terms of assembly, the complex is composed of two ATP-binding proteins (MetN), two transmembrane proteins (MetI) and a solute-binding protein (MetQ).

The protein localises to the cell inner membrane. It catalyses the reaction L-methionine(out) + ATP + H2O = L-methionine(in) + ADP + phosphate + H(+). The catalysed reaction is D-methionine(out) + ATP + H2O = D-methionine(in) + ADP + phosphate + H(+). Its function is as follows. Part of the ABC transporter complex MetNIQ involved in methionine import. Responsible for energy coupling to the transport system. In Xanthomonas campestris pv. campestris (strain 8004), this protein is Methionine import ATP-binding protein MetN.